A 555-amino-acid polypeptide reads, in one-letter code: Esterase-5A (555 aa).

An N-terminal signal peptide occupies residues 1-19; that stretch reads MHLVRWLICLIQLWIQLGA. Cysteines 87 and 106 form a disulfide. Asn-95 and Asn-116 each carry an N-linked (GlcNAc...) asparagine glycan. Ser-210 (acyl-ester intermediate) is an active-site residue. Cysteines 262 and 274 form a disulfide. N-linked (GlcNAc...) asparagine glycans are attached at residues Asn-479 and Asn-510. Cysteines 518 and 539 form a disulfide.

The protein belongs to the type-B carboxylesterase/lipase family.

The protein resides in the secreted. It catalyses the reaction a carboxylic ester + H2O = an alcohol + a carboxylate + H(+). This is Esterase-5A (Est-5A) from Drosophila miranda (Fruit fly).